The primary structure comprises 127 residues: MORF4 family-associated protein 1-like 1 (127 aa).

Residues 87–118 (GEADERVSELCEKAEEKAKEIAKMAEMLVELV) are a coiled coil.

It belongs to the MORF4 family-associated protein family.

The protein is MORF4 family-associated protein 1-like 1 (MRFAP1L1) of Homo sapiens (Human).